A 639-amino-acid chain; its full sequence is AP2-like ethylene-responsive transcription factor CRL5 (639 aa).

Disordered stretches follow at residues Pro25–His59 and Gly258–Lys277. A compositionally biased stretch (low complexity) spans Gln43 to His59. 2 DNA-binding regions (AP2/ERF) span residues Gln288–Pro351 and Met387–Asp445. Over residues Gln547 to Leu561 the composition is skewed to low complexity. The interval Gln547 to Leu579 is disordered.

The protein belongs to the AP2/ERF transcription factor family. AP2 subfamily. In terms of tissue distribution, highly expressed at the base of the stem. Expressed in stems. Expressed a low levels in crown roots and seeds. Expressed in the stem region where adventitious (crown) root initiation occurs.

It is found in the nucleus. Functionally, acts as a positive regulator of adventitious (crown) root formation by promoting its initiation. Promotes adventitious root initiation through repression of cytokinin signaling by positively regulating the two-component response regulator RR1. Regulated by the auxin response factor and transcriptional activator ARF23/ARF1. In Oryza sativa subsp. japonica (Rice), this protein is AP2-like ethylene-responsive transcription factor CRL5.